We begin with the raw amino-acid sequence, 599 residues long: MVKHQPLQYYEPQLCLSCLTGIYGCRWKRYQRSHDDTTKWERLWFLILTSSFFLTLVWFYFWWEVHNDYNEINWFLYNRMGYWSDWSIPILVTTAAGFTYITVLLILALCHIAVGQQMNLHWLHKIGLMTTLITTVVTMSSIAQLWDDEWEMVFISLQATAPFLHIGALAAVTALSWLIAGQFARMEKATSQMLMVTAYLAVVVALYLVPLTISSPCIMEKKALGPKPAIIGHRGAPMLAPENTLMSFQKAVEQKIYGVQADVILSYDGVPFLMHDKTLRRTTNVEEVFPGRAYEHSSMFNWTDLEMLNAGEWFLRNDPFWTAGSLSRSDYLEAANQSVCKLADMLEVIKDNTSLILNFQDLPPDHPYYTSYINITLKTILASGIQQQAVMWLPDTERQLVRQIAPAFQQTSGLKLDAERLREKGIVKLNLRYTKVTNEDVRDYMAANLSVNLYTVNEPWLYSILWCTGVPSVTSDSSHVLRKVPFPIWLMPPDEYRLIWITSDLISFIIIVGVFIFQNYHNDQWRLGSIRTYNPEQIMLSAAVRRSSRDVKIMKEKLIFSEINNGVETTDELSLCSENGYANEMVTPTDHRDTRLRMN.

At 1–42 (MVKHQPLQYYEPQLCLSCLTGIYGCRWKRYQRSHDDTTKWER) the chain is on the cytoplasmic side. 2 cysteine pairs are disulfide-bonded: cysteine 15–cysteine 18 and cysteine 25–cysteine 576. A helical transmembrane segment spans residues 43–63 (LWFLILTSSFFLTLVWFYFWW). The Extracellular segment spans residues 64–87 (EVHNDYNEINWFLYNRMGYWSDWS). A helical membrane pass occupies residues 88-108 (IPILVTTAAGFTYITVLLILA). Residues 109–125 (LCHIAVGQQMNLHWLHK) are Cytoplasmic-facing. A helical transmembrane segment spans residues 126-146 (IGLMTTLITTVVTMSSIAQLW). Over 147–160 (DDEWEMVFISLQAT) the chain is Extracellular. The chain crosses the membrane as a helical span at residues 161 to 181 (APFLHIGALAAVTALSWLIAG). The Cytoplasmic segment spans residues 182-192 (QFARMEKATSQ). A helical membrane pass occupies residues 193 to 213 (MLMVTAYLAVVVALYLVPLTI). Residues 214 to 497 (SSPCIMEKKA…IWLMPPDEYR (284 aa)) lie on the Extracellular side of the membrane. Residues 228 to 485 (PAIIGHRGAP…DSSHVLRKVP (258 aa)) form the GP-PDE domain. Residues asparagine 301, asparagine 336, asparagine 352, asparagine 374, and asparagine 448 are each glycosylated (N-linked (GlcNAc...) asparagine). The helical transmembrane segment at 498–518 (LIWITSDLISFIIIVGVFIFQ) threads the bilayer. Topologically, residues 519–599 (NYHNDQWRLG…DHRDTRLRMN (81 aa)) are cytoplasmic.

The protein belongs to the glycerophosphoryl diester phosphodiesterase family. Interacts with PRDX1; forms a mixed-disulfide with PRDX1, leading to disrupt intramolecular disulfide bond between Cys-25 and Cys-576. Intramolecular disulfide bond between Cys-25 and Cys-576 is reduced by PRDX1. As to expression, detected in mature motor neurons.

The protein resides in the endomembrane system. It localises to the cytoplasm. The protein localises to the perinuclear region. It is found in the cell projection. Its subcellular location is the growth cone. It catalyses the reaction a 1,2-diacyl-sn-glycero-3-phospho-(1D-myo-inositol-4,5-bisphosphate) + H2O = 1D-myo-inositol 1,4,5-trisphosphate + a 1,2-diacyl-sn-glycerol + H(+). The enzyme catalyses sn-glycerol 3-phosphocholine + H2O = sn-glycerol 3-phosphate + choline + H(+). With respect to regulation, activated by PRDX1 by reduction of an intramolecular disulfide bond. Functionally, glycerophosphodiester phosphodiesterase that promotes cell cycle exit and drives spinal motor neuron differentiation. Mediates the cleavage of glycosylphosphatidylinositol (GPI) anchor of target proteins: removes the GPI-anchor of RECK, leading to release RECK from the plasma membrane. May contribute to the osmotic regulation of cellular glycerophosphocholine. In Gallus gallus (Chicken), this protein is Glycerophosphodiester phosphodiesterase domain-containing protein 5 (GDPD5).